The sequence spans 236 residues: 7-cyano-7-deazaguanine synthase (236 aa).

Position 7-17 (7-17 (CSGGLDSVSLA)) interacts with ATP. The Zn(2+) site is built by Cys-185, Cys-193, Cys-196, and Cys-199.

The protein belongs to the QueC family. Zn(2+) is required as a cofactor.

The enzyme catalyses 7-carboxy-7-deazaguanine + NH4(+) + ATP = 7-cyano-7-deazaguanine + ADP + phosphate + H2O + H(+). Its pathway is purine metabolism; 7-cyano-7-deazaguanine biosynthesis. In terms of biological role, catalyzes the ATP-dependent conversion of 7-carboxy-7-deazaguanine (CDG) to 7-cyano-7-deazaguanine (preQ(0)). This chain is 7-cyano-7-deazaguanine synthase, found in Agrobacterium fabrum (strain C58 / ATCC 33970) (Agrobacterium tumefaciens (strain C58)).